We begin with the raw amino-acid sequence, 849 residues long: Membrane protein-large ribosomal subunit bL9 fusion protein (849 aa).

Residues M1–T680 are unknown. The next 2 membrane-spanning stretches (helical) occupy residues F11–Q31 and I64–F84. Residues K214–E342 form the GGDEF domain. Residues V681–K849 form a large ribosomal subunit protein bL9 region.

The protein belongs to the bacterial ribosomal protein bL9 family.

It is found in the cell membrane. Binds to the 23S rRNA. The sequence is that of Membrane protein-large ribosomal subunit bL9 fusion protein from Onion yellows phytoplasma (strain OY-M).